The chain runs to 427 residues: Trigger factor (427 aa).

Residues 163-248 form the PPIase FKBP-type domain; the sequence is GDTVVIDFVG…IHEVKAKEVP (86 aa).

This sequence belongs to the FKBP-type PPIase family. Tig subfamily.

The protein resides in the cytoplasm. The catalysed reaction is [protein]-peptidylproline (omega=180) = [protein]-peptidylproline (omega=0). Functionally, involved in protein export. Acts as a chaperone by maintaining the newly synthesized protein in an open conformation. Functions as a peptidyl-prolyl cis-trans isomerase. The protein is Trigger factor of Streptococcus suis (strain 98HAH33).